The chain runs to 244 residues: MSTNPKPAYRRVLLKLSGEALQGSEGFGIDPAVLDRMAQEIKELVELGVQVGLVIGGGNLFRGAGLAKAGMNRVVGDHMGMLATVMNGLAMRDALHRAYVNARLMSAISLQGICDSYVWAEAISQLRAGKVVIFSAGTGNPFFTTDSAACLRGIEIEADVVLKATKVDGVFTDDPVKNPDAVLCHELSYDEVLEKELKVMDLAAFTLARDHDLPIRVFNMNKPGALRRVIMGEPEGTLIHHVSK.

An ATP-binding site is contributed by 15-18 (KLSG). The interval 23 to 28 (GSEGFG) is involved in allosteric activation by GTP. Glycine 57 is a UMP binding site. ATP contacts are provided by glycine 58 and arginine 62. Residues aspartate 77 and 138-145 (TGNPFFTT) contribute to the UMP site. ATP-binding residues include threonine 165, phenylalanine 171, and aspartate 174.

The protein belongs to the UMP kinase family. As to quaternary structure, homohexamer.

Its subcellular location is the cytoplasm. The catalysed reaction is UMP + ATP = UDP + ADP. The protein operates within pyrimidine metabolism; CTP biosynthesis via de novo pathway; UDP from UMP (UMPK route): step 1/1. Its activity is regulated as follows. Allosterically activated by GTP. Inhibited by UTP. Catalyzes the reversible phosphorylation of UMP to UDP. The polypeptide is Uridylate kinase (Aeromonas hydrophila subsp. hydrophila (strain ATCC 7966 / DSM 30187 / BCRC 13018 / CCUG 14551 / JCM 1027 / KCTC 2358 / NCIMB 9240 / NCTC 8049)).